Consider the following 974-residue polypeptide: Apical junction component 1 homolog (974 aa).

Disordered stretches follow at residues 23-137, 201-233, and 306-326; these read PGLT…PSYP, ARSS…PRHV, and CSRP…GGSY. Ser52 bears the Phosphoserine mark. A compositionally biased stretch (pro residues) spans 69 to 79; the sequence is EPPPPEPAPPR. Residues 116-134 are compositionally biased toward basic and acidic residues; that stretch reads RGREAQRAVRVEGSPRREP. Ser129 is subject to Phosphoserine. Over residues 201 to 216 the composition is skewed to polar residues; sequence ARSSRSCAPRETTSWA. Arg322 bears the Omega-N-methylarginine mark. Phosphoserine is present on residues Ser468, Ser509, and Ser512. Positions 539–576 are disordered; the sequence is DLRSVDRPTAKGWELPGGRPRQPVSTVPEGPASSRQRS. Ser593 carries the phosphoserine modification. The tract at residues 618-661 is disordered; the sequence is AGPGGATLLAPSRSPPASAGSTEEPTGSGEAADASPEPSADEDD. Residues 623-636 show a composition bias toward low complexity; it reads ATLLAPSRSPPASA. The residue at position 749 (Arg749) is an Asymmetric dimethylarginine; alternate. The residue at position 749 (Arg749) is an Omega-N-methylarginine; alternate.

It localises to the apical cell membrane. The protein resides in the cell projection. It is found in the cilium. The protein localises to the cell junction. Its subcellular location is the adherens junction. Its function is as follows. May be involved in the control of adherens junction integrity. The protein is Apical junction component 1 homolog (Ajm1) of Mus musculus (Mouse).